Here is a 323-residue protein sequence, read N- to C-terminus: Ferrochelatase (323 aa).

Fe cation-binding residues include histidine 196 and glutamate 277.

Belongs to the ferrochelatase family.

The protein localises to the cytoplasm. The enzyme catalyses heme b + 2 H(+) = protoporphyrin IX + Fe(2+). It functions in the pathway porphyrin-containing compound metabolism; protoheme biosynthesis; protoheme from protoporphyrin-IX: step 1/1. Catalyzes the ferrous insertion into protoporphyrin IX. The protein is Ferrochelatase of Haemophilus influenzae (strain ATCC 51907 / DSM 11121 / KW20 / Rd).